A 356-amino-acid chain; its full sequence is Outer spore wall protein LDS2 (356 aa).

Residues 1–92 (MSTRPQPDWY…ISESVGNSDY (92 aa)) lie on the Cytoplasmic side of the membrane. Residues 93–113 (LHLFFLIFGYYLLNLLLIVAF) form a helical membrane-spanning segment. Residues 114–115 (TS) lie on the Extracellular side of the membrane. A helical transmembrane segment spans residues 116–136 (ILAWSLLVCIYLPFLGLFALP). At 137-213 (LAYMQTILIS…KRFYLVSLPQ (77 aa)) the chain is on the cytoplasmic side. Residues 214-234 (FFIFFFWYIFIAFMFLLLLLV) traverse the membrane as a helical segment. Residues 235–294 (PIVGPITINMLPFSPGMGFYYFEPYFVDVLHLDSRKLSKVYYKGFAKWLLYSISSGLLES) are Extracellular-facing. The helical transmembrane segment at 295–315 (IPILGGLFIGTNAVGASLWIV) threads the bilayer. The Cytoplasmic segment spans residues 316–356 (KEIKDRDQPAVPPSPPAEPEEPTVGSYAPPIQQSIAHINPP). Residues 322–356 (DQPAVPPSPPAEPEEPTVGSYAPPIQQSIAHINPP) form a disordered region. Polar residues predominate over residues 346–356 (IQQSIAHINPP).

This sequence belongs to the LDS family.

It localises to the prospore membrane. It is found in the lipid droplet. Its subcellular location is the spore wall. Functionally, involved in spore wall assembly. The chain is Outer spore wall protein LDS2 from Saccharomyces cerevisiae (strain ATCC 204508 / S288c) (Baker's yeast).